Here is a 168-residue protein sequence, read N- to C-terminus: Myelin basic protein (168 aa).

Ala1 carries the post-translational modification N-acetylalanine. 2 positions are modified to phosphoserine: Ser7 and Ser12. Tyr14 is subject to Phosphotyrosine. Thr17 carries the phosphothreonine modification. At Ser19 the chain carries Phosphoserine. Residue Thr20 is modified to Phosphothreonine. A citrulline mark is found at Arg25 and Arg31. A Phosphothreonine modification is found at Thr35. Residue Ser40 is modified to Phosphoserine. A disordered region spans residues 42 to 84 (GRFFSSDRGAPKRGSGKDHAARTTHYGSLPQKSGHRPQDENPV). 2 positions are modified to omega-N-methylarginine: Arg43 and Arg49. Positions 45–86 (FSSDRGAPKRGSGKDHAARTTHYGSLPQKSGHRPQDENPVVH) are induces experimental autoimmune encephalomyelitis (EAE). Ser56 is subject to Phosphoserine. The residue at position 65 (Thr65) is a Phosphothreonine. Tyr67 carries the phosphotyrosine modification. At Ser74 the chain carries Phosphoserine. Residues Thr93 and Thr96 each carry the phosphothreonine modification. Gln101 bears the Deamidated glutamine; partial mark. Arg105 carries the omega-N-methylarginine; alternate modification. Arg105 carries the symmetric dimethylarginine; alternate modification. Residue Ser113 is modified to Phosphoserine. Lys120 is modified (N6-acetyllysine). Arg128 carries the citrulline modification. Residue Gln145 is modified to Deamidated glutamine. Arg157 is modified (citrulline). Phosphoserine is present on Ser159. Ser163 carries the post-translational modification Phosphoserine; by UHMK1. Position 168 is a citrulline (Arg168).

It belongs to the myelin basic protein family. In terms of assembly, homodimer. In terms of processing, as in other animals, several charge isomers may be produced as a result of optional post-translational modifications, such as phosphorylation of serine or threonine residues, deamidation of glutamine or asparagine residues, citrullination and methylation of arginine residues. Phosphorylated by TAOK2, VRK2, MAPK11, MAPK12, MAPK14 and MINK1. Post-translationally, proteolytically cleaved in B cell lysosomes by cathepsin CTSG which degrades the major immunogenic MBP epitope and prevents the activation of MBP-specific autoreactive T cells. Found in both the central and the peripheral nervous system.

It localises to the myelin membrane. In terms of biological role, is, with PLP, the most abundant protein component of the myelin membrane in the CNS. Has a role in both the formation and stabilization of this compact multilayer arrangement of bilayers. Each splice variant and charge isomer may have a specialized function in the assembly of an optimized, biochemically functional myelin membrane. In Oryctolagus cuniculus (Rabbit), this protein is Myelin basic protein (MBP).